Reading from the N-terminus, the 347-residue chain is MLFSYLLATLPLLANAALTYKGADISSVFIEEKAGVAYKNLAGETQALEAILTDNGVNSIRQRVWVKNGDYDLTYNVNLAKRVAATGASIYLDLHYSDDWADPKHQTTPDGWSTDDINTLADQIYQYTLSVCNTFAEEKINVEIVSIGNEITSGLLWPLGKTPNYENIARLLHSGAWGVKDSKLATKPKILIHLDNGWDWDQQKYFYDTALGTGLLTSDDFDMIGVSYYPFYNEKATLASLKTSLTNIQTTYGKEVAVVETNWPVKCSSPEFAFPADLKDIPFSVDGQVTFLQRLAETLTATKASGFFYWEPAWTKNAGLGSSCEDNLLVDYNTNQVRNSVKAFGQV.

An N-terminal signal peptide occupies residues 1 to 16 (MLFSYLLATLPLLANA). Glu-150 serves as the catalytic Proton donor. Catalysis depends on Glu-260, which acts as the Nucleophile.

This sequence belongs to the glycosyl hydrolase 53 family.

Its subcellular location is the secreted. The catalysed reaction is The enzyme specifically hydrolyzes (1-&gt;4)-beta-D-galactosidic linkages in type I arabinogalactans.. Endogalactanase involved in the degradation of plant cell wall polysaccharides, and more particularly of hairy regions of pectin. In Aspergillus oryzae (strain ATCC 42149 / RIB 40) (Yellow koji mold), this protein is Probable arabinogalactan endo-beta-1,4-galactanase A (galA).